Consider the following 128-residue polypeptide: Large ribosomal subunit protein bL17 (128 aa).

The protein belongs to the bacterial ribosomal protein bL17 family. In terms of assembly, part of the 50S ribosomal subunit. Contacts protein L32.

The polypeptide is Large ribosomal subunit protein bL17 (Streptococcus gordonii (strain Challis / ATCC 35105 / BCRC 15272 / CH1 / DL1 / V288)).